The following is a 122-amino-acid chain: Putative TLX1 neighbor protein (122 aa).

The segment at 21–122 (SLLSQEAMGP…LGGGRGQRGQ (102 aa)) is disordered. The span at 113–122 (LGGGRGQRGQ) shows a compositional bias: gly residues.

This Homo sapiens (Human) protein is Putative TLX1 neighbor protein (TLX1NB).